Here is a 1243-residue protein sequence, read N- to C-terminus: Zinc finger protein ZFAT (1243 aa).

The C2H2-type 1 zinc finger occupies 12–35 (FMCKCCNLFSPNQSELLSHVSEKH). Disordered stretches follow at residues 51 to 116 (PLST…PSSL) and 147 to 189 (GEAG…GKEA). The span at 70-81 (MKRKRGRPKGST) shows a compositional bias: basic residues. The C2H2-type 2; degenerate zinc-finger motif lies at 116–141 (LECSKCCRKFSNTRQLRKHICIIVLN). A compositionally biased stretch (basic and acidic residues) spans 156 to 189 (ELEKKCKEDDREKASKRPRSQKTEKVQKISGKEA). 7 consecutive C2H2-type zinc fingers follow at residues 271–293 (FTCEYCNKVFKFKHSLQAHLRIH), 299–321 (YKCPQCSYASAIKANLNVHLRKH), 326–349 (FACDYCSFTCLSKGHLKVHIERVH), 354–377 (QHCRFCKKKYSDVKNLIKHIRDAH), 404–426 (YDCHICERKFKNELDRDRHMLVH), 432–454 (FACELCGHGATKYQALELHVRKH), and 458–481 (YVCAVCRKKFVSSIRLRTHIKEVH). Zn(2+) is bound by residues cysteine 273, cysteine 276, histidine 289, histidine 293, cysteine 301, cysteine 304, histidine 317, histidine 321, cysteine 328, cysteine 331, histidine 344, histidine 349, cysteine 356, cysteine 359, histidine 372, histidine 377, cysteine 406, cysteine 409, histidine 422, and histidine 426. Zn(2+) is bound by residues cysteine 460, cysteine 463, histidine 476, and histidine 481. Disordered stretches follow at residues 534-570 (EACPGDTQLEEGRKEPEAPGEMPAPAVHLASPQAEST), 603-625 (TSSAEAHAAPEKPPDMQHRSSVQ), and 638-705 (AQSA…CKAA). The segment covering 610–620 (AAPEKPPDMQH) has biased composition (basic and acidic residues). Residues 638 to 650 (AQSAGSDQESHGA) show a composition bias toward polar residues. 10 C2H2-type zinc fingers span residues 742–764 (LECEYCGKLFWYQVHFDMHVRTH), 770–793 (YYCSQCHYSSITKNCLKRHVIQKH), 798–822 (LKCPTDGCDYSTPDKYKLQAHLKVH), 830–853 (YSCPVCEKSFSEDRLIKSHIKTNH), 880–903 (MKCPYCDFYFMKNGSDLQRHIWAH), 909–931 (FKCSLCEYATRSKSNLKAHMNRH), 937–959 (HLCDMCGKKFKSKGTLKSHKLLH), 966–988 (FKCTVCDYTAAQKPQLLRHMEQH), 994–1017 (FRCAHCHYSCNISGSLKRHYNRKH), and 1041–1064 (LKCPVCSFVYGTKWEFNRHLKNKH). Positions 772, 775, 788, 793, 800, 805, 818, 822, 832, 835, 848, 853, 882, 885, 899, 903, 911, 914, 927, 931, 939, 942, 955, and 958 each coordinate Zn(2+).

In terms of tissue distribution, isoform 1 is strongly expressed in placenta, spleen, kidney, testis and peripheral blood leukocytes. Expressed in CD4+ and CD8+ T-cells, CD19+ B-cells and CB14+ monocytes. Isoform 3 is strongly expressed in placenta, ovary, tonsil, CD19+ B-cells and CD14+ monocytes.

The protein resides in the nucleus. The protein localises to the cytoplasm. It is found in the cytosol. In terms of biological role, may be involved in transcriptional regulation. Overexpression causes down-regulation of a number of genes involved in the immune response. Some genes are also up-regulated. The sequence is that of Zinc finger protein ZFAT (ZFAT) from Homo sapiens (Human).